Consider the following 278-residue polypeptide: Alpha-tocopherol transfer protein (278 aa).

One can recognise a CRAL-TRIO domain in the interval 88-253; the sequence is RPRSILGLLK…EYGGKEFSME (166 aa). Residue aspartate 185 participates in a 1,2-diacyl-sn-glycero-3-phospho-(1D-myo-inositol-3,4-bisphosphate) binding. Phenylalanine 187 is a binding site for (+)-alpha-tocopherol. 190–192 is an a 1,2-diacyl-sn-glycero-3-phospho-(1D-myo-inositol-3,4-bisphosphate) binding site; that stretch reads KVR. Residue 208–211 coordinates a 1,2-diacyl-sn-glycero-3-phospho-(1D-myo-inositol-4,5-bisphosphate); the sequence is SMIK. A 1,2-diacyl-sn-glycero-3-phospho-(1D-myo-inositol-3,4-bisphosphate) is bound by residues lysine 217 and arginine 221.

In terms of assembly, monomer and homotetramer. Phosphatidylinositol 4,5-bisphosphate binding induces the formation of homotetramers. Phosphatidylinositol 3,4-bisphosphate is less efficient in inducing tetramerization.

The protein resides in the cytoplasm. In terms of biological role, binds (+)-alpha-tocopherol, enhances its transfer between separate membranes, and stimulates its release from liver cells. Binds both phosphatidylinositol 3,4-bisphosphate and phosphatidylinositol 4,5-bisphosphate; the resulting conformation change is important for the release of the bound alpha-tocopherol. The protein is Alpha-tocopherol transfer protein (Ttpa) of Mus musculus (Mouse).